A 62-amino-acid chain; its full sequence is Photosystem II reaction center protein Z (62 aa).

2 consecutive transmembrane segments (helical) span residues 8-28 and 41-61; these read AVFALIATSLILLISVPVVFA and FSGTSLWIGLVFLVGILNSLI.

The protein belongs to the PsbZ family. As to quaternary structure, PSII is composed of 1 copy each of membrane proteins PsbA, PsbB, PsbC, PsbD, PsbE, PsbF, PsbH, PsbI, PsbJ, PsbK, PsbL, PsbM, PsbT, PsbY, PsbZ, Psb30/Ycf12, at least 3 peripheral proteins of the oxygen-evolving complex and a large number of cofactors. It forms dimeric complexes.

It localises to the plastid. It is found in the chloroplast thylakoid membrane. Its function is as follows. May control the interaction of photosystem II (PSII) cores with the light-harvesting antenna, regulates electron flow through the 2 photosystem reaction centers. PSII is a light-driven water plastoquinone oxidoreductase, using light energy to abstract electrons from H(2)O, generating a proton gradient subsequently used for ATP formation. In Nicotiana sylvestris (Wood tobacco), this protein is Photosystem II reaction center protein Z.